The primary structure comprises 623 residues: Replication protein A 70 kDa DNA-binding subunit (623 aa).

At Met1 the chain carries N-acetylmethionine. Residues Lys22 and Lys88 each participate in a glycyl lysine isopeptide (Lys-Gly) (interchain with G-Cter in ubiquitin) cross-link. Positions 116–163 are disordered; sequence VPYNEGYGQQQQQQQQQQQQAVPSPASAATPPASKPQPQNGSLGMGST. The span at 124–154 shows a compositional bias: low complexity; it reads QQQQQQQQQQQQAVPSPASAATPPASKPQPQ. An N6-acetyllysine; alternate mark is found at Lys172 and Lys176. Residues Lys172 and Lys176 each participate in a glycyl lysine isopeptide (Lys-Gly) (interchain with G-Cter in ubiquitin); alternate cross-link. At Thr189 the chain carries Phosphothreonine. Lys192 is covalently cross-linked (Glycyl lysine isopeptide (Lys-Gly) (interchain with G-Cter in ubiquitin)). Thr200 carries the post-translational modification Phosphothreonine. Residues 206–290 constitute a DNA-binding region (OB); it reads WTICARVTNK…VKNDYEMTFN (85 aa). Residues Lys229 and Lys253 each participate in a glycyl lysine isopeptide (Lys-Gly) (interchain with G-Cter in ubiquitin) cross-link. At Lys268 the chain carries N6-acetyllysine; alternate. Lys268 is covalently cross-linked (Glycyl lysine isopeptide (Lys-Gly) (interchain with G-Cter in ubiquitin); alternate). Residues Lys276 and Lys340 each participate in a glycyl lysine isopeptide (Lys-Gly) (interchain with G-Cter in ubiquitin) cross-link. Ser393 carries the post-translational modification Phosphoserine. Residue Lys419 forms a Glycyl lysine isopeptide (Lys-Gly) (interchain with G-Cter in ubiquitin) linkage. Lys458 participates in a covalent cross-link: Glycyl lysine isopeptide (Lys-Gly) (interchain with G-Cter in SUMO). A Glycyl lysine isopeptide (Lys-Gly) (interchain with G-Cter in ubiquitin) cross-link involves residue Lys467. The C4-type zinc finger occupies 490–512; it reads CPTQDCNKKVIDQQNGLYRCEKC. Residue Lys562 forms a Glycyl lysine isopeptide (Lys-Gly) (interchain with G-Cter in ubiquitin) linkage. Lys586 is covalently cross-linked (Glycyl lysine isopeptide (Lys-Gly) (interchain with G-Cter in SUMO)).

This sequence belongs to the replication factor A protein 1 family. As to quaternary structure, component of the canonical replication protein A complex (RPA), a heterotrimer composed of RPA1, RPA2 and RPA3. The DNA-binding activity may reside exclusively on the RPA1 subunit. Interacts with PRPF19; the PRP19-CDC5L complex is recruited to the sites of DNA repair where it ubiquitinates the replication protein A complex (RPA). Interacts with RIPK1. Interacts with the polymerase alpha subunit POLA1/p180; this interaction stabilizes the replicative complex and reduces the misincorporation rate of DNA polymerase alpha by acting as a fidelity clamp. Interacts with RAD51 and SENP6 to regulate DNA repair. Interacts with HELB; this interaction promotes HELB recruitment to chromatin following DNA damage. Interacts with PRIMPOL; leading to recruit PRIMPOL on chromatin and stimulate its DNA primase activity. Interacts with XPA; the interaction is direct and associates XPA with the RPA complex. Interacts with ETAA1; the interaction is direct and promotes ETAA1 recruitment at stalled replication forks. Interacts with RPA1; this interaction associates HROB with the RPA complex. Interacts (when poly-ADP-ribosylated) with HTATSF1. DNA damage-induced 'Lys-63'-linked polyubiquitination by PRPF19 mediates ATRIP recruitment to the RPA complex at sites of DNA damage and activation of ATR. Ubiquitinated by RFWD3 at stalled replication forks in response to DNA damage: ubiquitination by RFWD3 does not lead to degradation by the proteasome and promotes removal of the RPA complex from stalled replication forks, promoting homologous recombination. In terms of processing, sumoylated on lysine residues Lys-458 and Lys-586, with Lys-458 being the major site. Sumoylation promotes recruitment of RAD51 to the DNA damage foci to initiate DNA repair through homologous recombination. Desumoylated by SENP6. Post-translationally, poly-ADP-ribosylated by PARP1; promoting recruitment of HTATSF1.

It localises to the nucleus. The protein localises to the PML body. Functionally, as part of the heterotrimeric replication protein A complex (RPA/RP-A), binds and stabilizes single-stranded DNA intermediates, that form during DNA replication or upon DNA stress. It prevents their reannealing and in parallel, recruits and activates different proteins and complexes involved in DNA metabolism. Thereby, it plays an essential role both in DNA replication and the cellular response to DNA damage. In the cellular response to DNA damage, the RPA complex controls DNA repair and DNA damage checkpoint activation. Through recruitment of ATRIP activates the ATR kinase a master regulator of the DNA damage response. It is required for the recruitment of the DNA double-strand break repair factors RAD51 and RAD52 to chromatin in response to DNA damage. Also recruits to sites of DNA damage proteins like XPA and XPG that are involved in nucleotide excision repair and is required for this mechanism of DNA repair. Also plays a role in base excision repair (BER) probably through interaction with UNG. Also recruits SMARCAL1/HARP, which is involved in replication fork restart, to sites of DNA damage. May also play a role in telomere maintenance. The protein is Replication protein A 70 kDa DNA-binding subunit (Rpa1) of Mus musculus (Mouse).